Here is a 1081-residue protein sequence, read N- to C-terminus: DNA polymerase delta catalytic subunit (1081 aa).

A disordered region spans residues 1 to 22 (MTSKRPGGSSFQPEVKRKRESD). Zn(2+) contacts are provided by C981, C984, C998, and C1001. The CysA-type zinc finger occupies 981–1001 (CLGCKSVLPRAESENAVCKHC). Residues C1030, C1033, C1043, and C1048 each coordinate [4Fe-4S] cluster. The CysB motif signature appears at 1030-1048 (CQNCAKTMQDKVNCSARDC).

It belongs to the DNA polymerase type-B family. As to quaternary structure, heterodimer with subunits of 125 kDa and 50 kDa. The 125 kDa subunit contains the polymerase active site and most likely the active site for the 3'-5' exonuclease activity. It depends on [4Fe-4S] cluster as a cofactor.

It localises to the nucleus. It carries out the reaction DNA(n) + a 2'-deoxyribonucleoside 5'-triphosphate = DNA(n+1) + diphosphate. Functionally, possesses two enzymatic activities: DNA synthesis (polymerase) and an exonucleolytic activity that degrades single stranded DNA in the 3'- to 5'-direction. Required with its accessory proteins (proliferating cell nuclear antigen (PCNA) and replication factor C (RFC) or activator 1) for leading strand synthesis. Also involved in completing Okazaki fragments initiated by the DNA polymerase alpha/primase complex. The sequence is that of DNA polymerase delta catalytic subunit from Caenorhabditis elegans.